The sequence spans 429 residues: Protein FAM98B (429 aa).

Residues 304-429 (RVPDRGGRPN…GGGGGGYRRY (126 aa)) form a disordered region. The segment covering 305-314 (VPDRGGRPNE) has biased composition (basic and acidic residues). The segment covering 332-429 (GGRGGWGGGG…GGGGGGYRRY (98 aa)) has biased composition (gly residues).

It belongs to the FAM98 family. Homodimer. Component of a tRNA-splicing ligase complex. Interacts with FAM98A.

The protein localises to the nucleus. It localises to the cytoplasm. Functionally, positively stimulates PRMT1-induced protein arginine dimethylated arginine methylation. This Mus musculus (Mouse) protein is Protein FAM98B (Fam98b).